A 241-amino-acid chain; its full sequence is MQRDYTATEVFQESGPDAIVYLHGGAWIDVRNSPRDFAELAARVREDAPLASQYAVTYRLSPEVQHPVHVADCVEHISQLIVEKGIRKLHLLGHSVGATLCWQILTALPGDRRYPEGPDFAMKLALVRSSLAHVFLVDGIYSLRALLEEYPDYDYFVNKAFKSLKDFEDPSESAERISAGPILHVIHSYKDELLTLKQTQYLTAVLTAHQIPYKLYVDDLGLHEDVYRNEKVAAYIVAQLP.

Residues 23–27 carry the HGGXW motif; it reads HGGAW. Catalysis depends on S95, which acts as the Nucleophile. Catalysis depends on residues D191 and H223.

Belongs to the kynurenine formamidase family. In terms of assembly, homodimer.

The enzyme catalyses N-formyl-L-kynurenine + H2O = L-kynurenine + formate + H(+). It participates in amino-acid degradation; L-tryptophan degradation via kynurenine pathway; L-kynurenine from L-tryptophan: step 2/2. Functionally, catalyzes the hydrolysis of N-formyl-L-kynurenine to L-kynurenine, the second step in the kynurenine pathway of tryptophan degradation. Kynurenine may be further oxidized to nicotinic acid, NAD(H) and NADP(H). Required for elimination of toxic metabolites. The sequence is that of Kynurenine formamidase from Eremothecium gossypii (strain ATCC 10895 / CBS 109.51 / FGSC 9923 / NRRL Y-1056) (Yeast).